We begin with the raw amino-acid sequence, 173 residues long: uncharacterized protein (173 aa).

Belongs to the M.jannaschii MJ0150/MJ0739/MJ0745/MJ1460/MJ1642 family.

This is an uncharacterized protein from Methanocaldococcus jannaschii (strain ATCC 43067 / DSM 2661 / JAL-1 / JCM 10045 / NBRC 100440) (Methanococcus jannaschii).